Consider the following 375-residue polypeptide: Putative fimbrium tip subunit Fim1C (375 aa).

The signal sequence occupies residues 1–16; the sequence is MKLLANIFLSGLAILA. A lipid anchor (N-palmitoyl cysteine) is attached at Cys-17. Residue Cys-17 is the site of S-diacylglycerol cysteine attachment. A propeptide spanning residues 17–47 is cleaved from the precursor; the sequence is CVSCSKDEDPVLPLEGAKLSVAVKASGTATK.

This sequence belongs to the bacteroidetes fimbrillin superfamily. FimA/Mfa1 family. As to quaternary structure, may be part of the fimbrial tip.

The protein resides in the fimbrium. The protein localises to the cell outer membrane. Its function is as follows. Probably a component of the fimbrium tip. Fimbriae are filamentous appendages on the cell surface that mediate cell adhesion and biofilm formation. This Parabacteroides distasonis (strain ATCC 8503 / DSM 20701 / CIP 104284 / JCM 5825 / NCTC 11152) protein is Putative fimbrium tip subunit Fim1C.